Reading from the N-terminus, the 876-residue chain is Alanine--tRNA ligase (876 aa).

The Zn(2+) site is built by H565, H569, C667, and H671.

It belongs to the class-II aminoacyl-tRNA synthetase family. The cofactor is Zn(2+).

It is found in the cytoplasm. The enzyme catalyses tRNA(Ala) + L-alanine + ATP = L-alanyl-tRNA(Ala) + AMP + diphosphate. Its function is as follows. Catalyzes the attachment of alanine to tRNA(Ala) in a two-step reaction: alanine is first activated by ATP to form Ala-AMP and then transferred to the acceptor end of tRNA(Ala). Also edits incorrectly charged Ser-tRNA(Ala) and Gly-tRNA(Ala) via its editing domain. The protein is Alanine--tRNA ligase of Desulfosudis oleivorans (strain DSM 6200 / JCM 39069 / Hxd3) (Desulfococcus oleovorans).